A 452-amino-acid polypeptide reads, in one-letter code: UDP-N-acetylmuramoylalanine--D-glutamate ligase (452 aa).

Residue 119–125 (GSNGKTT) participates in ATP binding.

It belongs to the MurCDEF family.

The protein resides in the cytoplasm. It carries out the reaction UDP-N-acetyl-alpha-D-muramoyl-L-alanine + D-glutamate + ATP = UDP-N-acetyl-alpha-D-muramoyl-L-alanyl-D-glutamate + ADP + phosphate + H(+). The protein operates within cell wall biogenesis; peptidoglycan biosynthesis. In terms of biological role, cell wall formation. Catalyzes the addition of glutamate to the nucleotide precursor UDP-N-acetylmuramoyl-L-alanine (UMA). The protein is UDP-N-acetylmuramoylalanine--D-glutamate ligase of Streptococcus pyogenes serotype M12 (strain MGAS9429).